The chain runs to 418 residues: rRNA methyltransferase 3, mitochondrial (418 aa).

The transit peptide at 1–40 (MAAPAKGMWCSLGSLLRVVQTRDLNARRWVRALRRSPVRV) directs the protein to the mitochondrion. Residues 41-90 (LSPSGQVEERKRAPDQQPRKAVPKASSQGQRQKQPLETSPSQTPHTWEEA) are disordered. Basic and acidic residues predominate over residues 47–58 (VEERKRAPDQQP). Over residues 65 to 85 (ASSQGQRQKQPLETSPSQTPH) the composition is skewed to polar residues. Gly354, Ile378, and Leu387 together coordinate S-adenosyl-L-methionine.

The protein belongs to the class IV-like SAM-binding methyltransferase superfamily. RNA methyltransferase TrmH family.

It is found in the mitochondrion. It carries out the reaction guanosine(1370) in 16S rRNA + S-adenosyl-L-methionine = 2'-O-methylguanosine(1370) in 16S rRNA + S-adenosyl-L-homocysteine + H(+). In terms of biological role, S-adenosyl-L-methionine-dependent 2'-O-ribose methyltransferase that catalyzes the formation of 2'-O-methylguanosine at position 1370 (Gm1370) in the 16S mitochondrial large subunit ribosomal RNA (mtLSU rRNA), a conserved modification in the peptidyl transferase domain of the mtLSU rRNA. Also required for formation of 2'-O-methyluridine at position 1369 (Um1369) mediated by MRM2. The sequence is that of rRNA methyltransferase 3, mitochondrial from Mus musculus (Mouse).